Reading from the N-terminus, the 577-residue chain is Sulfite reductase [NADPH] hemoprotein beta-component (577 aa).

Cys440, Cys446, Cys486, and Cys490 together coordinate [4Fe-4S] cluster. Residue Cys490 participates in siroheme binding.

It belongs to the nitrite and sulfite reductase 4Fe-4S domain family. In terms of assembly, alpha(8)-beta(8). The alpha component is a flavoprotein, the beta component is a hemoprotein. Siroheme is required as a cofactor. The cofactor is [4Fe-4S] cluster.

The catalysed reaction is hydrogen sulfide + 3 NADP(+) + 3 H2O = sulfite + 3 NADPH + 4 H(+). It functions in the pathway sulfur metabolism; hydrogen sulfide biosynthesis; hydrogen sulfide from sulfite (NADPH route): step 1/1. Component of the sulfite reductase complex that catalyzes the 6-electron reduction of sulfite to sulfide. This is one of several activities required for the biosynthesis of L-cysteine from sulfate. The polypeptide is Sulfite reductase [NADPH] hemoprotein beta-component (Vibrio cholerae serotype O1 (strain ATCC 39541 / Classical Ogawa 395 / O395)).